Reading from the N-terminus, the 446-residue chain is tRNA-2-methylthio-N(6)-dimethylallyladenosine synthase (446 aa).

The MTTase N-terminal domain maps to 8-124 (KTYRVKSFGC…LPGMIDAAVA (117 aa)). Residues Cys17, Cys53, Cys87, Cys160, Cys164, and Cys167 each contribute to the [4Fe-4S] cluster site. The Radical SAM core domain maps to 146–378 (RKSAPSAFLT…QAALNRDQAA (233 aa)). In terms of domain architecture, TRAM spans 381–442 (AGSVGRTCEV…PNSLAGQLLE (62 aa)).

It belongs to the methylthiotransferase family. MiaB subfamily. As to quaternary structure, monomer. It depends on [4Fe-4S] cluster as a cofactor.

The protein localises to the cytoplasm. The catalysed reaction is N(6)-dimethylallyladenosine(37) in tRNA + (sulfur carrier)-SH + AH2 + 2 S-adenosyl-L-methionine = 2-methylsulfanyl-N(6)-dimethylallyladenosine(37) in tRNA + (sulfur carrier)-H + 5'-deoxyadenosine + L-methionine + A + S-adenosyl-L-homocysteine + 2 H(+). Functionally, catalyzes the methylthiolation of N6-(dimethylallyl)adenosine (i(6)A), leading to the formation of 2-methylthio-N6-(dimethylallyl)adenosine (ms(2)i(6)A) at position 37 in tRNAs that read codons beginning with uridine. The polypeptide is tRNA-2-methylthio-N(6)-dimethylallyladenosine synthase (Erythrobacter litoralis (strain HTCC2594)).